The sequence spans 365 residues: Chorismate synthase (365 aa).

The tract at residues 41–60 (MQHDLDRRRPGTSRYTTARR) is disordered. NADP(+)-binding residues include Arg48 and Arg54. FMN-binding positions include 125 to 127 (RSS), 238 to 239 (NA), Gly278, 293 to 297 (KPTSS), and Arg319.

This sequence belongs to the chorismate synthase family. Homotetramer. The cofactor is FMNH2.

It carries out the reaction 5-O-(1-carboxyvinyl)-3-phosphoshikimate = chorismate + phosphate. Its pathway is metabolic intermediate biosynthesis; chorismate biosynthesis; chorismate from D-erythrose 4-phosphate and phosphoenolpyruvate: step 7/7. In terms of biological role, catalyzes the anti-1,4-elimination of the C-3 phosphate and the C-6 proR hydrogen from 5-enolpyruvylshikimate-3-phosphate (EPSP) to yield chorismate, which is the branch point compound that serves as the starting substrate for the three terminal pathways of aromatic amino acid biosynthesis. This reaction introduces a second double bond into the aromatic ring system. The protein is Chorismate synthase of Shewanella amazonensis (strain ATCC BAA-1098 / SB2B).